Here is a 135-residue protein sequence, read N- to C-terminus: Small ribosomal subunit protein eS6 (135 aa).

It belongs to the eukaryotic ribosomal protein eS6 family.

The chain is Small ribosomal subunit protein eS6 from Methanococcoides burtonii (strain DSM 6242 / NBRC 107633 / OCM 468 / ACE-M).